The following is a 344-amino-acid chain: uncharacterized protein (344 aa).

NADP(+)-binding residues include K38 and Y167.

Belongs to the NAD(P)-dependent epimerase/dehydratase family. Dihydroflavonol-4-reductase subfamily.

This is an uncharacterized protein from Saccharomyces cerevisiae (strain ATCC 204508 / S288c) (Baker's yeast).